The sequence spans 332 residues: Beta-chimaerin (332 aa).

The Phorbol-ester/DAG-type zinc finger occupies 78–128; sequence THNFKVHTFRGPHWCEYCANFMWGLIAQGVRCSDCGLNVHKQCSKHVPNDC. The Rho-GAP domain occupies 141–332; that stretch reads CDLTTLVKAH…ILIENEDVLF (192 aa).

The protein localises to the membrane. With respect to regulation, in the inactive state, the N terminus protrudes into the active site of the Rho-GAP domain, sterically blocking Rac binding. Phospholipid binding to the Phorbol-ester/DAG-type zinc-finger/C1 domain triggers the cooperative dissociation of these interactions, allowing the N-terminus to move out of the active site and thereby activating the enzyme. GTPase-activating protein for p21-rac. The chain is Beta-chimaerin (Chn2) from Mus musculus (Mouse).